The following is an 88-amino-acid chain: Protein LE25 (88 aa).

The tract at residues 1–88 (MQTGKDAASA…YGATGNHTTF (88 aa)) is disordered. Residues 14–65 (GMEKTKANVQEKAERMTTRDPLKKEMATEKKEDRVAAAEMGKRDAKAQHAAE) are compositionally biased toward basic and acidic residues.

It belongs to the LEA type 1 family. Accumulates in developing seeds and drought-stressed leaves.

This is Protein LE25 (LE25) from Solanum lycopersicum (Tomato).